The primary structure comprises 1166 residues: ATP-dependent helicase/deoxyribonuclease subunit B (1166 aa).

The region spanning 1–290 (MGMRFILGRS…DTLEGNFQNR (290 aa)) is the UvrD-like helicase ATP-binding domain. 8-15 (GRSGTNKS) serves as a coordination point for ATP. The UvrD-like helicase C-terminal domain occupies 283–588 (LEGNFQNRPY…QFSHVPPSMD (306 aa)). Positions 802, 1123, 1126, and 1132 each coordinate [4Fe-4S] cluster.

Belongs to the helicase family. AddB/RexB type 1 subfamily. As to quaternary structure, heterodimer of AddA and AddB. Requires Mg(2+) as cofactor. The cofactor is [4Fe-4S] cluster.

The heterodimer acts as both an ATP-dependent DNA helicase and an ATP-dependent, dual-direction single-stranded exonuclease. Recognizes the chi site generating a DNA molecule suitable for the initiation of homologous recombination. The AddB subunit has 5' -&gt; 3' nuclease activity but not helicase activity. This Oceanobacillus iheyensis (strain DSM 14371 / CIP 107618 / JCM 11309 / KCTC 3954 / HTE831) protein is ATP-dependent helicase/deoxyribonuclease subunit B.